We begin with the raw amino-acid sequence, 423 residues long: Divalent metal cation transporter MntH (423 aa).

11 helical membrane passes run 31 to 51 (LMML…GNFA), 58 to 78 (SSFG…AMLI), 116 to 136 (IIAI…FQLV), 137 to 157 (FGIS…MILI), 168 to 188 (VVIG…LFFA), 213 to 233 (AAGI…SALF), 254 to 274 (IAMV…AAVF), 302 to 322 (VLFG…GTMA), 342 to 362 (FITM…TDIL), 363 to 383 (VMSQ…LLIF), and 401 to 421 (YAGV…MVTL).

This sequence belongs to the NRAMP family.

It is found in the cell inner membrane. Its function is as follows. H(+)-stimulated, divalent metal cation uptake system. The protein is Divalent metal cation transporter MntH of Vibrio campbellii (strain ATCC BAA-1116).